We begin with the raw amino-acid sequence, 287 residues long: Bifunctional protein FolD (287 aa).

NADP(+) contacts are provided by residues 166-168 (GAS) and Ile-232.

This sequence belongs to the tetrahydrofolate dehydrogenase/cyclohydrolase family. In terms of assembly, homodimer.

The enzyme catalyses (6R)-5,10-methylene-5,6,7,8-tetrahydrofolate + NADP(+) = (6R)-5,10-methenyltetrahydrofolate + NADPH. The catalysed reaction is (6R)-5,10-methenyltetrahydrofolate + H2O = (6R)-10-formyltetrahydrofolate + H(+). It functions in the pathway one-carbon metabolism; tetrahydrofolate interconversion. Catalyzes the oxidation of 5,10-methylenetetrahydrofolate to 5,10-methenyltetrahydrofolate and then the hydrolysis of 5,10-methenyltetrahydrofolate to 10-formyltetrahydrofolate. The sequence is that of Bifunctional protein FolD from Pectobacterium atrosepticum (strain SCRI 1043 / ATCC BAA-672) (Erwinia carotovora subsp. atroseptica).